The sequence spans 791 residues: 1-phosphatidylinositol 4,5-bisphosphate phosphodiesterase delta-4 (791 aa).

Residues 16-124 (LLMQKGTMMR…WMQGLQLLVG (109 aa)) form the PH domain. A substrate binding region spans residues 26–53 (KVRSKSWKKLRFFRLQDDGMTVWHARQA). EF-hand domains are found at residues 134-169 (RLDQWLSDWFQRGDKNQDGRMSFGEVQRLLHLMNVE), 170-205 (MDQEYAFQLFQTADTSQSGTLEGEEFVEFYKSLTQR), and 207-237 (EVQELFEKFSSDGQKLTLLEFVDFLQEEQKE). Residues aspartate 147, asparagine 149, aspartate 151, arginine 153, glutamate 158, aspartate 183, serine 185, serine 187, threonine 189, and glutamate 194 each contribute to the Ca(2+) site. The short motif at 213–243 (EKFSSDGQKLTLLEFVDFLQEEQKEGERASD) is the GBA element. The region spanning 290-435 (QDMTQPLNHY…LRGKILVKGK (146 aa)) is the PI-PLC X-box domain. Histidine 305 is an active-site residue. Asparagine 306, glutamate 335, and aspartate 337 together coordinate Ca(2+). Histidine 350 is a catalytic residue. Glutamate 384 serves as a coordination point for Ca(2+). Substrate-binding residues include lysine 433, lysine 435, serine 551, and arginine 578. The PI-PLC Y-box domain maps to 522–638 (LSALVVYLKA…GYVLKPDFLR (117 aa)). In terms of domain architecture, C2 spans 638-765 (RDAQSSFHPE…QGYRHIHLLS (128 aa)). Ca(2+) contacts are provided by isoleucine 679, aspartate 681, asparagine 705, aspartate 734, tyrosine 735, and aspartate 736. Positions 760–763 (HIHL) match the PDZ-binding motif.

As to quaternary structure, interacts with GRIP1. Interacts (via GBA motif) with guanine nucleotide-binding protein G(i) alpha subunit GNAI3 (inactive GDP-bound form); low-affinity interaction. Requires Ca(2+) as cofactor.

The protein resides in the membrane. Its subcellular location is the nucleus. The protein localises to the cytoplasm. It localises to the endoplasmic reticulum. It catalyses the reaction a 1,2-diacyl-sn-glycero-3-phospho-(1D-myo-inositol-4,5-bisphosphate) + H2O = 1D-myo-inositol 1,4,5-trisphosphate + a 1,2-diacyl-sn-glycerol + H(+). It carries out the reaction a 1,2-diacyl-sn-glycero-3-phospho-(1D-myo-inositol) + H2O = 1D-myo-inositol 1-phosphate + a 1,2-diacyl-sn-glycerol + H(+). In terms of biological role, hydrolyzes the phosphatidylinositol 4,5-bisphosphate (PIP2) to generate 2 second messenger molecules diacylglycerol (DAG) and inositol 1,4,5-trisphosphate (IP3). DAG mediates the activation of protein kinase C (PKC), while IP3 releases Ca(2+) from intracellular stores. Required for acrosome reaction in sperm during fertilization, probably by acting as an important enzyme for intracellular Ca(2+) mobilization in the zona pellucida-induced acrosome reaction. May play a role in cell growth. Modulates the liver regeneration in cooperation with nuclear PKC. Overexpression up-regulates the Erk signaling pathway and proliferation. The protein is 1-phosphatidylinositol 4,5-bisphosphate phosphodiesterase delta-4 (PLCD4) of Bos taurus (Bovine).